The primary structure comprises 240 residues: uncharacterized protein (240 aa).

Residues Leu3–His27 form a C2H2-type zinc finger. Disordered stretches follow at residues His21–Glu43 and Ala120–Ile171. Basic and acidic residues predominate over residues Ala120–Lys136. The span at Ser155–Ser166 shows a compositional bias: low complexity.

This is an uncharacterized protein from Schizosaccharomyces pombe (strain 972 / ATCC 24843) (Fission yeast).